The sequence spans 365 residues: Aminotransferase poxL (365 aa).

R92 provides a ligand contact to pyridoxal 5'-phosphate. K193 bears the N6-(pyridoxal phosphate)lysine mark. Pyridoxal 5'-phosphate is bound at residue E229.

This sequence belongs to the class-IV pyridoxal-phosphate-dependent aminotransferase family. Requires pyridoxal 5'-phosphate as cofactor.

The protein operates within secondary metabolite biosynthesis. Its function is as follows. Aminotransferase; part of the gene cluster that mediates the biosynthesis of oxaleimides, cytotoxic compounds containing an unusual disubstituted succinimide moiety. The first step of the pathway is provided by the HR-PKS poxF that serves in a new mode of collaborative biosynthesis with the PKS-NRPS poxE, by providing the olefin containing amino acid substrate via the synthesis of an ACP-bound dec-4-enoate. The cytochrome P450 monooxygenase poxM-catalyzed oxidation at the alpha-position creates the enzyme-bound 2-hydroxydec-4-enoyl-ACP thioester, which may be prone to spontaneous hydrolysis to yield 2-hydroxydec-4-enoic acid due to increased electrophilicity of the carbonyl. 2-hydroxydec-4-enoic acid can then be further oxidized by poxM to yield the alpha-ketoacid 2-oxodec-4-enoicacid, which is reductively aminated by the aminotransferase poxL to yield (S,E)-2-aminodec-4-enoic acid. The Hybrid PKS-NRPS synthetase poxE then performs condensation between the octaketide product of its PKS modules and the amino group of (S,E)-2-aminodec-4-enoic acid which is activated and incorporated by the adenylation domain. The resulting aminoacyl product can be cyclized by the Diels-Alderase PoxQ and reductively released by the reductive (R) domain of poxE to yield an aldehyde intermediate. The released aldehyde is then substrate for a Knoevenagel condensation by the hydrolyase poxO followed by an oxidation at the 5-position of the pyrrolidone ring. The presence of the olefin from the amino acid building block allows for migration of the substituted allyl group to occur. This allylic transposition reaction takes place in a conjugate addition, semipinacol-like fashion to yield a succinimide intermediate. Iterative two-electron oxidations of the C7 methyl of the succinimide intermediate to the carboxylic acid can be catalyzed by one of two remaining cytochrome P450 monooxygenasess poxC or poxD to yield oxaleimide A. Subsequent oxidation yields the maleimide scaffold oxaleimide I. Both oxaleimide A and oxaleimide I can undergo oxidative modifications in the decalin ring to yield the series of products oxaleimides B to H. The chain is Aminotransferase poxL from Penicillium oxalicum (strain 114-2 / CGMCC 5302) (Penicillium decumbens).